We begin with the raw amino-acid sequence, 169 residues long: Ubiquitin-fold modifier-conjugating enzyme 1 (169 aa).

The active-site Glycyl thioester intermediate is the Cys116.

Belongs to the ubiquitin-conjugating enzyme family. UFC1 subfamily.

In terms of biological role, E2-like enzyme which forms an intermediate with UFM1 via a thioester linkage. In Branchiostoma floridae (Florida lancelet), this protein is Ubiquitin-fold modifier-conjugating enzyme 1.